The chain runs to 184 residues: MELDYLLATAMFLIVCVYVISETVNLHSVYDIEEAKKEFLMYYNDLKYNYSISKGDLIFNFKVNKIGYVIEGFVFKDTSESRELIKYLENLNGSYIIAYSPSKDEFIITKNHEFLRIIGHYNISAKYKKGEYGDIEIIYPKNYSINYREFQGISCNKLFEVPFYIVDKNENITLKYYGILEVGR.

A helical membrane pass occupies residues 5 to 27; sequence YLLATAMFLIVCVYVISETVNLH.

The protein resides in the membrane. This is an uncharacterized protein from Methanocaldococcus jannaschii (strain ATCC 43067 / DSM 2661 / JAL-1 / JCM 10045 / NBRC 100440) (Methanococcus jannaschii).